The primary structure comprises 506 residues: Abscisic acid 8'-hydroxylase 2 (506 aa).

The helical transmembrane segment at 3-23 (FLLFFVFVTAAVLCFVVPAFL) threads the bilayer. Residue Cys437 coordinates heme.

This sequence belongs to the cytochrome P450 family. Heme is required as a cofactor. In internodes and expanding leaves. Weak expression in seedlings.

The protein resides in the membrane. The enzyme catalyses 2-cis-(+)-abscisate + reduced [NADPH--hemoprotein reductase] + O2 = (+)-8'-hydroxyabscisate + oxidized [NADPH--hemoprotein reductase] + H2O + H(+). It functions in the pathway plant hormone degradation; abscisic acid degradation. Its function is as follows. Involved in the oxidative degradation of abscisic acid. The sequence is that of Abscisic acid 8'-hydroxylase 2 (CYP707A6) from Oryza sativa subsp. indica (Rice).